We begin with the raw amino-acid sequence, 439 residues long: Nuclear hormone receptor family member nhr-97 (439 aa).

Positions 1-13 (MSGDAQPSSNQRA) are enriched in polar residues. The tract at residues 1-22 (MSGDAQPSSNQRATEARPPPSP) is disordered. Residues 32-108 (GALCVVCGDR…VGMKIEAVKM (77 aa)) constitute a DNA-binding region (nuclear receptor). 2 consecutive NR C4-type zinc fingers follow at residues 35 to 56 (CVVCGDRACSHLYYGVAACHGC) and 72 to 96 (CRYGGNCSISTAGRNACRYCRFHRC). The tract at residues 112-135 (LTKRKKEKTDEDDTDDGGSHESFE) is disordered. An NR LBD domain is found at 173–408 (FVQPSLQNLL…GEGLLFWQLY (236 aa)).

The protein belongs to the nuclear hormone receptor family.

The protein resides in the nucleus. Its function is as follows. Orphan nuclear receptor. This is Nuclear hormone receptor family member nhr-97 (nhr-97) from Caenorhabditis elegans.